Consider the following 310-residue polypeptide: Malate dehydrogenase (310 aa).

NAD(+) is bound by residues 7–13 (GAAGGIG) and D34. Substrate is bound by residues R81 and R87. Residues N94 and 117 to 119 (ITN) contribute to the NAD(+) site. Residues N119 and R153 each coordinate substrate. H177 (proton acceptor) is an active-site residue. M227 is an NAD(+) binding site.

This sequence belongs to the LDH/MDH superfamily. MDH type 1 family. As to quaternary structure, homodimer.

The enzyme catalyses (S)-malate + NAD(+) = oxaloacetate + NADH + H(+). In terms of biological role, catalyzes the reversible oxidation of malate to oxaloacetate. The chain is Malate dehydrogenase from Idiomarina loihiensis (strain ATCC BAA-735 / DSM 15497 / L2-TR).